The following is a 200-amino-acid chain: Probable GTP-binding protein EngB (200 aa).

In terms of domain architecture, EngB-type G spans Thr22 to Ala194. GTP-binding positions include Gly30 to Ser37, Gly57 to Leu61, Asp75 to Gly78, Thr142 to Asp145, and Phe173 to Ala175. Ser37 and Thr59 together coordinate Mg(2+).

This sequence belongs to the TRAFAC class TrmE-Era-EngA-EngB-Septin-like GTPase superfamily. EngB GTPase family. It depends on Mg(2+) as a cofactor.

In terms of biological role, necessary for normal cell division and for the maintenance of normal septation. The polypeptide is Probable GTP-binding protein EngB (Pelobacter propionicus (strain DSM 2379 / NBRC 103807 / OttBd1)).